The sequence spans 984 residues: Putative formate dehydrogenase SH0748 (984 aa).

The region spanning Glu3–Asp79 is the 2Fe-2S ferredoxin-type domain. Residues Cys37, Cys48, Cys51, and Cys63 each coordinate [2Fe-2S] cluster. The 4Fe-4S His(Cys)3-ligated-type domain occupies Asp79–Gly119. Positions 95, 99, 102, 109, 147, 150, 153, 157, 190, 193, 196, 200, 264, 267, 271, and 299 each coordinate [4Fe-4S] cluster. 4Fe-4S ferredoxin-type domains are found at residues Pro138–Thr165 and Asn181–Glu211. A formate dehydrogenase region spans residues Met252–Lys984. The region spanning Ile257–Gln313 is the 4Fe-4S Mo/W bis-MGD-type domain.

This sequence in the C-terminal section; belongs to the prokaryotic molybdopterin-containing oxidoreductase family. The cofactor is [2Fe-2S] cluster. It depends on [4Fe-4S] cluster as a cofactor. Mo-bis(molybdopterin guanine dinucleotide) is required as a cofactor.

It catalyses the reaction formate + NAD(+) = CO2 + NADH. This is Putative formate dehydrogenase SH0748 from Staphylococcus haemolyticus (strain JCSC1435).